Consider the following 265-residue polypeptide: 5'-nucleotidase SurE (265 aa).

A divalent metal cation-binding residues include Asp-8, Asp-9, Ser-40, and Asn-98.

This sequence belongs to the SurE nucleotidase family. It depends on a divalent metal cation as a cofactor.

Its subcellular location is the cytoplasm. It carries out the reaction a ribonucleoside 5'-phosphate + H2O = a ribonucleoside + phosphate. Functionally, nucleotidase that shows phosphatase activity on nucleoside 5'-monophosphates. The protein is 5'-nucleotidase SurE of Nostoc sp. (strain PCC 7120 / SAG 25.82 / UTEX 2576).